Reading from the N-terminus, the 72-residue chain is Small ribosomal subunit protein eS17 (72 aa).

The protein belongs to the eukaryotic ribosomal protein eS17 family.

The polypeptide is Small ribosomal subunit protein eS17 (Nanoarchaeum equitans (strain Kin4-M)).